The following is a 76-amino-acid chain: ATP synthase subunit 9, mitochondrial (76 aa).

2 helical membrane passes run 13–35 (GIST…ALIQ) and 50–72 (FAIL…SFLL).

The protein belongs to the ATPase C chain family. As to quaternary structure, F-type ATPases have 2 components, CF(1) - the catalytic core - and CF(0) - the membrane proton channel. In yeast, the dimeric form of ATP synthase consists of 18 polypeptides: alpha, beta, gamma, delta, epsilon, 4 (B), 5 (OSCP), 6 (A), 8, 9 (C), d, E (Tim11), f, g, h, i, j and k.

The protein resides in the mitochondrion membrane. Functionally, mitochondrial membrane ATP synthase (F(1)F(0) ATP synthase or Complex V) produces ATP from ADP in the presence of a proton gradient across the membrane which is generated by electron transport complexes of the respiratory chain. F-type ATPases consist of two structural domains, F(1) - containing the extramembraneous catalytic core and F(0) - containing the membrane proton channel, linked together by a central stalk and a peripheral stalk. During catalysis, ATP synthesis in the catalytic domain of F(1) is coupled via a rotary mechanism of the central stalk subunits to proton translocation. Part of the complex F(0) domain. A homomeric c-ring of probably 10 subunits is part of the complex rotary element. In Eremothecium gossypii (strain ATCC 10895 / CBS 109.51 / FGSC 9923 / NRRL Y-1056) (Yeast), this protein is ATP synthase subunit 9, mitochondrial (ATP9).